Here is a 193-residue protein sequence, read N- to C-terminus: Oligoribonuclease (193 aa).

An Exonuclease domain is found at 14 to 177 (LIWIDLEMTG…SDIYDSIAEL (164 aa)). Residue Tyr-135 is part of the active site.

This sequence belongs to the oligoribonuclease family.

It localises to the cytoplasm. Functionally, 3'-to-5' exoribonuclease specific for small oligoribonucleotides. The chain is Oligoribonuclease from Xylella fastidiosa (strain Temecula1 / ATCC 700964).